We begin with the raw amino-acid sequence, 346 residues long: MKIELLTTPADAAEVRIEEQIRPARMEDFTGQQRLTDNLKVFISAARMREEALDHVLLSGPPGLGKTTLAHIIAAEMGSSIRATSGPLLDKAGNLAGLLTGLKRGDVLFIDEIHRMPPAVEEYLYSAMEDFRIDIMIDSGPSARAVQLKIEPFTLVGATTRSGLLTSPLRARFGINSRFDYYSPDLLEGIVMRASGILSIGIDQDAASEIAGRSRGTPRIANRLLRRARDFAQVEKAAVISRRIAMKTLECLDIDEEGLDDMDKKIMDTIVNRFSGGPVGVASLAVSVGEEQDTIEEVYEPYLIQAGYLSRTPRGRVATRQALLRFSDGSVSRHTGGLFDADGNLS.

The interval 1-182 is large ATPase domain (RuvB-L); it reads MKIELLTTPA…FGINSRFDYY (182 aa). Residues Ile21, Arg22, Gly63, Lys66, Thr67, Thr68, 129–131, Arg172, Tyr182, and Arg219 each bind ATP; that span reads EDF. A Mg(2+)-binding site is contributed by Thr67. The tract at residues 183 to 253 is small ATPAse domain (RuvB-S); the sequence is SPDLLEGIVM…IAMKTLECLD (71 aa). The head domain (RuvB-H) stretch occupies residues 256 to 346; that stretch reads EEGLDDMDKK…GLFDADGNLS (91 aa). Residues Arg311 and Arg316 each contribute to the DNA site.

This sequence belongs to the RuvB family. In terms of assembly, homohexamer. Forms an RuvA(8)-RuvB(12)-Holliday junction (HJ) complex. HJ DNA is sandwiched between 2 RuvA tetramers; dsDNA enters through RuvA and exits via RuvB. An RuvB hexamer assembles on each DNA strand where it exits the tetramer. Each RuvB hexamer is contacted by two RuvA subunits (via domain III) on 2 adjacent RuvB subunits; this complex drives branch migration. In the full resolvosome a probable DNA-RuvA(4)-RuvB(12)-RuvC(2) complex forms which resolves the HJ.

The protein localises to the cytoplasm. The enzyme catalyses ATP + H2O = ADP + phosphate + H(+). In terms of biological role, the RuvA-RuvB-RuvC complex processes Holliday junction (HJ) DNA during genetic recombination and DNA repair, while the RuvA-RuvB complex plays an important role in the rescue of blocked DNA replication forks via replication fork reversal (RFR). RuvA specifically binds to HJ cruciform DNA, conferring on it an open structure. The RuvB hexamer acts as an ATP-dependent pump, pulling dsDNA into and through the RuvAB complex. RuvB forms 2 homohexamers on either side of HJ DNA bound by 1 or 2 RuvA tetramers; 4 subunits per hexamer contact DNA at a time. Coordinated motions by a converter formed by DNA-disengaged RuvB subunits stimulates ATP hydrolysis and nucleotide exchange. Immobilization of the converter enables RuvB to convert the ATP-contained energy into a lever motion, pulling 2 nucleotides of DNA out of the RuvA tetramer per ATP hydrolyzed, thus driving DNA branch migration. The RuvB motors rotate together with the DNA substrate, which together with the progressing nucleotide cycle form the mechanistic basis for DNA recombination by continuous HJ branch migration. Branch migration allows RuvC to scan DNA until it finds its consensus sequence, where it cleaves and resolves cruciform DNA. This is Holliday junction branch migration complex subunit RuvB from Chlorobium phaeovibrioides (strain DSM 265 / 1930) (Prosthecochloris vibrioformis (strain DSM 265)).